The sequence spans 118 residues: Peptidyl-tRNA hydrolase (118 aa).

The protein belongs to the PTH2 family.

The protein resides in the cytoplasm. It catalyses the reaction an N-acyl-L-alpha-aminoacyl-tRNA + H2O = an N-acyl-L-amino acid + a tRNA + H(+). In terms of biological role, the natural substrate for this enzyme may be peptidyl-tRNAs which drop off the ribosome during protein synthesis. This Thermococcus onnurineus (strain NA1) protein is Peptidyl-tRNA hydrolase.